Here is a 349-residue protein sequence, read N- to C-terminus: Phenylalanine--tRNA ligase alpha subunit (349 aa).

E261 is a Mg(2+) binding site.

Belongs to the class-II aminoacyl-tRNA synthetase family. Phe-tRNA synthetase alpha subunit type 1 subfamily. In terms of assembly, tetramer of two alpha and two beta subunits. It depends on Mg(2+) as a cofactor.

The protein resides in the cytoplasm. The catalysed reaction is tRNA(Phe) + L-phenylalanine + ATP = L-phenylalanyl-tRNA(Phe) + AMP + diphosphate + H(+). The chain is Phenylalanine--tRNA ligase alpha subunit from Leuconostoc citreum (strain KM20).